A 294-amino-acid polypeptide reads, in one-letter code: tRNA dimethylallyltransferase (294 aa).

Residue 10–17 coordinates ATP; it reads GPTAVGKT. 12 to 17 lines the substrate pocket; it reads TAVGKT. Residues 35-38 form an interaction with substrate tRNA region; it reads DSQQ.

It belongs to the IPP transferase family. As to quaternary structure, monomer. The cofactor is Mg(2+).

The catalysed reaction is adenosine(37) in tRNA + dimethylallyl diphosphate = N(6)-dimethylallyladenosine(37) in tRNA + diphosphate. In terms of biological role, catalyzes the transfer of a dimethylallyl group onto the adenine at position 37 in tRNAs that read codons beginning with uridine, leading to the formation of N6-(dimethylallyl)adenosine (i(6)A). The polypeptide is tRNA dimethylallyltransferase (Streptococcus pneumoniae (strain ATCC 700669 / Spain 23F-1)).